We begin with the raw amino-acid sequence, 23 residues long: Ascaphin-1 (23 aa).

Position 23 is an asparagine amide (Asn-23).

Expressed by the skin glands.

It is found in the secreted. Antimicrobial peptide that shows higher potency against Gram-negative bacteria than against Gram-positive bacteria. Has a very week hemolytic activity. This chain is Ascaphin-1, found in Ascaphus truei (Coastal tailed frog).